We begin with the raw amino-acid sequence, 78 residues long: Exodeoxyribonuclease 7 small subunit (78 aa).

It belongs to the XseB family. In terms of assembly, heterooligomer composed of large and small subunits.

The protein resides in the cytoplasm. The catalysed reaction is Exonucleolytic cleavage in either 5'- to 3'- or 3'- to 5'-direction to yield nucleoside 5'-phosphates.. Its function is as follows. Bidirectionally degrades single-stranded DNA into large acid-insoluble oligonucleotides, which are then degraded further into small acid-soluble oligonucleotides. The chain is Exodeoxyribonuclease 7 small subunit from Synechococcus sp. (strain JA-2-3B'a(2-13)) (Cyanobacteria bacterium Yellowstone B-Prime).